We begin with the raw amino-acid sequence, 192 residues long: Ribosome maturation factor RimM (192 aa).

A PRC barrel domain is found at 116 to 192 (PGEYYWVDLI…RIIVDWQPDY (77 aa)).

It belongs to the RimM family. Binds ribosomal protein uS19.

The protein localises to the cytoplasm. Functionally, an accessory protein needed during the final step in the assembly of 30S ribosomal subunit, possibly for assembly of the head region. Essential for efficient processing of 16S rRNA. May be needed both before and after RbfA during the maturation of 16S rRNA. It has affinity for free ribosomal 30S subunits but not for 70S ribosomes. This is Ribosome maturation factor RimM from Verminephrobacter eiseniae (strain EF01-2).